Here is a 635-residue protein sequence, read N- to C-terminus: 1-deoxy-D-xylulose-5-phosphate synthase (635 aa).

Thiamine diphosphate is bound by residues histidine 79 and 120-122 (GHS). Position 151 (aspartate 151) interacts with Mg(2+). Thiamine diphosphate contacts are provided by residues 152–153 (GA), asparagine 182, tyrosine 291, and glutamate 372. Residue asparagine 182 participates in Mg(2+) binding.

It belongs to the transketolase family. DXPS subfamily. Homodimer. It depends on Mg(2+) as a cofactor. The cofactor is thiamine diphosphate.

It catalyses the reaction D-glyceraldehyde 3-phosphate + pyruvate + H(+) = 1-deoxy-D-xylulose 5-phosphate + CO2. The protein operates within metabolic intermediate biosynthesis; 1-deoxy-D-xylulose 5-phosphate biosynthesis; 1-deoxy-D-xylulose 5-phosphate from D-glyceraldehyde 3-phosphate and pyruvate: step 1/1. Its function is as follows. Catalyzes the acyloin condensation reaction between C atoms 2 and 3 of pyruvate and glyceraldehyde 3-phosphate to yield 1-deoxy-D-xylulose-5-phosphate (DXP). This chain is 1-deoxy-D-xylulose-5-phosphate synthase, found in Xylella fastidiosa (strain M23).